The following is a 461-amino-acid chain: Tubulin gamma-2 chain (461 aa).

142–148 (AGGTGSG) lines the GTP pocket.

The protein belongs to the tubulin family.

It is found in the cytoplasm. Its subcellular location is the cytoskeleton. It localises to the microtubule organizing center. The protein localises to the centrosome. In terms of biological role, tubulin is the major constituent of microtubules. The gamma chain is found at microtubule organizing centers (MTOC) such as the spindle poles or the centrosome, suggesting that it is involved in the minus-end nucleation of microtubule assembly. This chain is Tubulin gamma-2 chain, found in Euplotoides octocarinatus (Freshwater ciliate).